Here is a 266-residue protein sequence, read N- to C-terminus: Protein crossbronx-like (266 aa).

Positions 15-178 constitute a UBC core domain; the sequence is KQGYHILAEY…VQEQAILSRN (164 aa). The disordered stretch occupies residues 226-266; that stretch reads SEYLGHIDSSRQMDEEETNQLEKLHRGRIPEPQREEAEVSL. The segment covering 245–266 has biased composition (basic and acidic residues); that stretch reads QLEKLHRGRIPEPQREEAEVSL.

This sequence belongs to the ubiquitin-conjugating enzyme family. FTS subfamily.

In Drosophila sechellia (Fruit fly), this protein is Protein crossbronx-like.